The primary structure comprises 338 residues: Acetoin:2,6-dichlorophenolindophenol oxidoreductase subunit beta (338 aa).

As to quaternary structure, tetramer of 2 alpha and 2 beta subunits.

The protein operates within ketone degradation; acetoin degradation. Its function is as follows. Catalyzes the 2,6-dichlorophenolindophenol-dependent cleavage of acetoin into acetate and acetaldehyde, in vitro. The beta subunit is probably not the catalytic subunit of the enzyme. The protein is Acetoin:2,6-dichlorophenolindophenol oxidoreductase subunit beta (acoB) of Cupriavidus necator (strain ATCC 17699 / DSM 428 / KCTC 22496 / NCIMB 10442 / H16 / Stanier 337) (Ralstonia eutropha).